Reading from the N-terminus, the 209-residue chain is ATP-dependent dethiobiotin synthetase BioD (209 aa).

13–18 (DVGKTV) contacts ATP. Position 17 (threonine 17) interacts with Mg(2+). Lysine 33 is an active-site residue. Mg(2+) is bound at residue glutamate 100. ATP-binding positions include 100 to 103 (EGAG) and 184 to 186 (PRL).

This sequence belongs to the dethiobiotin synthetase family. Homodimer. Mg(2+) is required as a cofactor.

It is found in the cytoplasm. It catalyses the reaction (7R,8S)-7,8-diammoniononanoate + CO2 + ATP = (4R,5S)-dethiobiotin + ADP + phosphate + 3 H(+). The protein operates within cofactor biosynthesis; biotin biosynthesis; biotin from 7,8-diaminononanoate: step 1/2. Catalyzes a mechanistically unusual reaction, the ATP-dependent insertion of CO2 between the N7 and N8 nitrogen atoms of 7,8-diaminopelargonic acid (DAPA, also called 7,8-diammoniononanoate) to form a ureido ring. In Rhizorhabdus wittichii (strain DSM 6014 / CCUG 31198 / JCM 15750 / NBRC 105917 / EY 4224 / RW1) (Sphingomonas wittichii), this protein is ATP-dependent dethiobiotin synthetase BioD.